The following is an 878-amino-acid chain: Probable glucan endo-1,3-beta-glucosidase ARB_02077 (878 aa).

An N-terminal signal peptide occupies residues 1–27; the sequence is MARGLVSSLLLGQLLLVLVGLFSPAGA. N-linked (GlcNAc...) asparagine glycans are attached at residues Asn228, Asn257, Asn290, and Asn297. A disordered region spans residues 373 to 472; that stretch reads AGSGSKAKRL…TACPSAPVTK (100 aa). Residues 400–416 show a composition bias toward pro residues; that stretch reads APAPQPPAQSTAPPYPI. Positions 433–452 are enriched in low complexity; the sequence is VPTRVPTGGVPSGTTGTAPS. N-linked (GlcNAc...) asparagine glycans are attached at residues Asn505, Asn659, Asn795, and Asn862.

It belongs to the glycosyl hydrolase 55 family.

The protein resides in the secreted. It carries out the reaction Hydrolysis of (1-&gt;3)-beta-D-glucosidic linkages in (1-&gt;3)-beta-D-glucans.. In terms of biological role, probable glucan endo-1,3-beta-glucosidase involved in the hydrolysis of fungal cell wall. Classified as a small-oligosaccharide-producing type based its the end products: glucose, laminaribiose or laminaritetraose. This chain is Probable glucan endo-1,3-beta-glucosidase ARB_02077, found in Arthroderma benhamiae (strain ATCC MYA-4681 / CBS 112371) (Trichophyton mentagrophytes).